The chain runs to 436 residues: MSKPLPLVTRQGDRIVIVNGLRTPFAKQATAYHGVPAVDLGKIVVSELLARSGISSELIDQLVFGQVVQMPEAPNIAREIVLGTGMSVHTDAYSVSRACATSFQAVANVAESIIAGSVDIAIAGGADSSSVLPIGVSKALARTLVDANKARSLSQKLKLFSRLRLRDLLPVAPAVAEYSTGLRMGDTAEQMAKTYGISREDQDALALRSHQLAAEAWQQGWLHDEVMTAYIPPYREAIIEDNNIRKDSILAQYAKLRPAFDRQHGSVTAANSTPLTDGAAAVLMMSESKAKALGLPPLGYLRSFAFSAIDVWQDMLLGPSYATPLALDRAGITLADLTLIDMHEAFAAQTLANLKMFASDTFAREKLGRSQAIGEVDMSKFNVLGGSIAYGHPFAATGARMITQTLNELRRRGGGLGLTTACAAGGLGAAMILEVE.

The active-site Acyl-thioester intermediate is the Cys-99. Active-site proton acceptor residues include His-392 and Cys-422.

The protein belongs to the thiolase-like superfamily. Thiolase family. In terms of assembly, heterotetramer of two alpha chains (FadJ) and two beta chains (FadI).

It is found in the cytoplasm. The catalysed reaction is an acyl-CoA + acetyl-CoA = a 3-oxoacyl-CoA + CoA. The protein operates within lipid metabolism; fatty acid beta-oxidation. Functionally, catalyzes the final step of fatty acid oxidation in which acetyl-CoA is released and the CoA ester of a fatty acid two carbons shorter is formed. The polypeptide is 3-ketoacyl-CoA thiolase (Yersinia pestis bv. Antiqua (strain Angola)).